A 191-amino-acid polypeptide reads, in one-letter code: Transcription factor FapR (191 aa).

It belongs to the FapR family.

Functionally, transcriptional factor involved in regulation of membrane lipid biosynthesis by repressing genes involved in fatty acid and phospholipid metabolism. The protein is Transcription factor FapR of Oceanobacillus iheyensis (strain DSM 14371 / CIP 107618 / JCM 11309 / KCTC 3954 / HTE831).